We begin with the raw amino-acid sequence, 270 residues long: tRNA pseudouridine synthase A (270 aa).

D60 functions as the Nucleophile in the catalytic mechanism. Y118 serves as a coordination point for substrate.

It belongs to the tRNA pseudouridine synthase TruA family. As to quaternary structure, homodimer.

It carries out the reaction uridine(38/39/40) in tRNA = pseudouridine(38/39/40) in tRNA. Functionally, formation of pseudouridine at positions 38, 39 and 40 in the anticodon stem and loop of transfer RNAs. This chain is tRNA pseudouridine synthase A, found in Salmonella typhimurium (strain LT2 / SGSC1412 / ATCC 700720).